The following is a 396-amino-acid chain: Elongation factor Tu (396 aa).

One can recognise a tr-type G domain in the interval 10–205 (KPHVNIGTIG…ACDDSIPDPE (196 aa)). The G1 stretch occupies residues 19–26 (GHVDHGKT). 19 to 26 (GHVDHGKT) serves as a coordination point for GTP. Threonine 26 contacts Mg(2+). The tract at residues 62 to 66 (GITIN) is G2. Residues 83 to 86 (DAPG) are G3. GTP-binding positions include 83–87 (DAPGH) and 138–141 (NKCD). The segment at 138–141 (NKCD) is G4. The tract at residues 175-177 (SAL) is G5.

The protein belongs to the TRAFAC class translation factor GTPase superfamily. Classic translation factor GTPase family. EF-Tu/EF-1A subfamily. In terms of assembly, monomer.

The protein localises to the cytoplasm. The catalysed reaction is GTP + H2O = GDP + phosphate + H(+). Its function is as follows. GTP hydrolase that promotes the GTP-dependent binding of aminoacyl-tRNA to the A-site of ribosomes during protein biosynthesis. The polypeptide is Elongation factor Tu (Corynebacterium diphtheriae (strain ATCC 700971 / NCTC 13129 / Biotype gravis)).